Reading from the N-terminus, the 317-residue chain is Probable deoxyhypusine synthase (317 aa).

Lys-285 functions as the Nucleophile in the catalytic mechanism.

It belongs to the deoxyhypusine synthase family. NAD(+) is required as a cofactor.

It catalyses the reaction [eIF5A protein]-L-lysine + spermidine = [eIF5A protein]-deoxyhypusine + propane-1,3-diamine. It participates in protein modification; eIF5A hypusination. Functionally, catalyzes the NAD-dependent oxidative cleavage of spermidine and the subsequent transfer of the butylamine moiety of spermidine to the epsilon-amino group of a specific lysine residue of the eIF-5A precursor protein to form the intermediate deoxyhypusine residue. This is Probable deoxyhypusine synthase (dys) from Methanosarcina thermophila.